The primary structure comprises 954 residues: Glycine dehydrogenase (decarboxylating) (954 aa).

K701 is subject to N6-(pyridoxal phosphate)lysine.

It belongs to the GcvP family. As to quaternary structure, the glycine cleavage system is composed of four proteins: P, T, L and H. The cofactor is pyridoxal 5'-phosphate.

The enzyme catalyses N(6)-[(R)-lipoyl]-L-lysyl-[glycine-cleavage complex H protein] + glycine + H(+) = N(6)-[(R)-S(8)-aminomethyldihydrolipoyl]-L-lysyl-[glycine-cleavage complex H protein] + CO2. Its function is as follows. The glycine cleavage system catalyzes the degradation of glycine. The P protein binds the alpha-amino group of glycine through its pyridoxal phosphate cofactor; CO(2) is released and the remaining methylamine moiety is then transferred to the lipoamide cofactor of the H protein. The chain is Glycine dehydrogenase (decarboxylating) from Bordetella parapertussis (strain 12822 / ATCC BAA-587 / NCTC 13253).